Here is a 349-residue protein sequence, read N- to C-terminus: Heme A synthase (349 aa).

A run of 5 helical transmembrane segments spans residues 15–35, 101–121, 132–152, 162–182, and 203–223; these read AVQV…VVGG, LLGR…ALTG, FGLF…VASG, YRLA…VAVA, and VLVG…GLDA. Histidine 265 contacts heme. 3 helical membrane passes run 268–288, 296–316, and 317–337; these read IAYL…RLGG, LVFA…VHMV, and PLDL…AAMI. Residue histidine 324 coordinates heme.

Belongs to the COX15/CtaA family. Type 2 subfamily. In terms of assembly, interacts with CtaB. The cofactor is heme b.

It is found in the cell membrane. It catalyses the reaction Fe(II)-heme o + 2 A + H2O = Fe(II)-heme a + 2 AH2. It participates in porphyrin-containing compound metabolism; heme A biosynthesis; heme A from heme O: step 1/1. Functionally, catalyzes the conversion of heme O to heme A by two successive hydroxylations of the methyl group at C8. The first hydroxylation forms heme I, the second hydroxylation results in an unstable dihydroxymethyl group, which spontaneously dehydrates, resulting in the formyl group of heme A. This chain is Heme A synthase, found in Azorhizobium caulinodans (strain ATCC 43989 / DSM 5975 / JCM 20966 / LMG 6465 / NBRC 14845 / NCIMB 13405 / ORS 571).